A 1094-amino-acid chain; its full sequence is Probable arabinosyltransferase C (1094 aa).

Helical transmembrane passes span 28 to 50 (IARY…TPLL), 232 to 251 (AAMI…LHIL), 264 to 286 (PARW…WWHF), 341 to 360 (SIWM…WVIS), 373 to 392 (TSRA…WLPL), 431 to 453 (IGAL…LVAI), 466 to 488 (RFGV…IPIF), 530 to 552 (SIAR…AMSL), 565 to 582 (SRRI…MMFT), 586 to 608 (WTHH…AVAV), 620 to 642 (TVFA…GWWY), 657 to 679 (WRWS…AAWF), and 700 to 722 (LAGI…EVVS). The span at 817–831 (GSEPGTEGGTTAAPG) shows a compositional bias: low complexity. Positions 817–836 (GSEPGTEGGTTAAPGINGSR) are disordered.

This sequence belongs to the emb family.

The protein resides in the cell membrane. Functionally, arabinosyl transferase responsible for the polymerization of arabinose into the arabinan of arabinogalactan. The sequence is that of Probable arabinosyltransferase C (embC) from Mycobacterium bovis (strain ATCC BAA-935 / AF2122/97).